Reading from the N-terminus, the 203-residue chain is Methyltransferase-like 26 (203 aa).

Belongs to the UPF0585 family.

In Xenopus tropicalis (Western clawed frog), this protein is Methyltransferase-like 26.